We begin with the raw amino-acid sequence, 65 residues long: MEKLFTGTYGVFLESNDSDFEDFINTIMTVLTGKKESKQLSWLTIFIIFVVCIVVFTFLYLKLMC.

The chain crosses the membrane as a helical span at residues 40-60 (LSWLTIFIIFVVCIVVFTFLY).

This sequence belongs to the chordopoxvirinae I2 family.

It is found in the virion membrane. Its function is as follows. Late protein which probably plays a role in virus entry into the host cell. The sequence is that of Protein I2 homolog from Fowlpox virus (strain NVSL) (FPV).